We begin with the raw amino-acid sequence, 317 residues long: Ferrochelatase (317 aa).

Fe cation-binding residues include His192 and Glu271.

Belongs to the ferrochelatase family.

The protein resides in the cytoplasm. It carries out the reaction heme b + 2 H(+) = protoporphyrin IX + Fe(2+). The protein operates within porphyrin-containing compound metabolism; protoheme biosynthesis; protoheme from protoporphyrin-IX: step 1/1. Its function is as follows. Catalyzes the ferrous insertion into protoporphyrin IX. This is Ferrochelatase from Citrifermentans bemidjiense (strain ATCC BAA-1014 / DSM 16622 / JCM 12645 / Bem) (Geobacter bemidjiensis).